A 501-amino-acid polypeptide reads, in one-letter code: MKFKADEISSIIKERIENFDLNLEIEETGKIISVADGVAKVYGLKNIMAGEMVEFENGDKGMALNLEESSVGIVILGKGEGLKEGASVKRLKKLLKVPVGEALIGRVVNALGEPIDAKGVINANEYRFVEEKAKGIMARKSVHEPLHTGIKAIDALVPIGRGQRELIIGDRQTGKTTVAVDTIISQRGQGVICIYVAIGQKQSTVAQVVKRLEEHGAMEYTIVVNAGASDPAALQYLAPYTGVTMGEFFRDNAKHALIVYDDLSKHAVAYREMSLILRRPPGREAYPGDVFYLHSRLLERASKLNDELGAGSLTALPIIETQAGDVSAYIPTNVISITDGQIFLETDLFNSGIRPAINVGLSVSRVGGAAQIKATKQVSGTLRLDLAQYRELQAFAQFASDLDEASRKQLERGQRMVELLKQPPYSPLSVEKQVVLIFAGTKGFLDDIAVSRIEEFEDGIYPFIEAKHPDIFEQIRSKKALDSDLEEKLAKAINEFKANHL.

Position 169–176 (169–176) interacts with ATP; the sequence is GDRQTGKT.

The protein belongs to the ATPase alpha/beta chains family. In terms of assembly, F-type ATPases have 2 components, CF(1) - the catalytic core - and CF(0) - the membrane proton channel. CF(1) has five subunits: alpha(3), beta(3), gamma(1), delta(1), epsilon(1). CF(0) has three main subunits: a(1), b(2) and c(9-12). The alpha and beta chains form an alternating ring which encloses part of the gamma chain. CF(1) is attached to CF(0) by a central stalk formed by the gamma and epsilon chains, while a peripheral stalk is formed by the delta and b chains.

The protein localises to the cell inner membrane. It catalyses the reaction ATP + H2O + 4 H(+)(in) = ADP + phosphate + 5 H(+)(out). Functionally, produces ATP from ADP in the presence of a proton gradient across the membrane. The alpha chain is a regulatory subunit. The chain is ATP synthase subunit alpha from Campylobacter jejuni subsp. jejuni serotype O:23/36 (strain 81-176).